The following is a 197-amino-acid chain: Phospholipid hydroperoxide glutathione peroxidase (197 aa).

At Ser-40 the chain carries Phosphoserine. The active site involves Sec-73. Position 73 (Sec-73) is a non-standard amino acid, selenocysteine. At Val-78 the chain carries Phosphoserine.

Belongs to the glutathione peroxidase family. Monomer. Has a tendency to form higher mass oligomers. Interacts with FUNDC1; this interaction promotes GPX4 recruitment into mitochondria through TOM/TIM complex where it is degraded by mitophagy. Present primarily in testis. Expressed in flagella of epididymal sperm. Isoform Cytoplasmic: Highly expressed in testis. Present in spermatogonia, spermatocyte and spermatid (at protein level).

It localises to the nucleus. The protein localises to the nucleolus. The protein resides in the mitochondrion. Its subcellular location is the cytoplasm. The enzyme catalyses a hydroperoxy polyunsaturated fatty acid + 2 glutathione = a hydroxy polyunsaturated fatty acid + glutathione disulfide + H2O. It catalyses the reaction 2 glutathione + H2O2 = glutathione disulfide + 2 H2O. It carries out the reaction tert-butyl hydroperoxide + 2 glutathione = tert-butanol + glutathione disulfide + H2O. The catalysed reaction is cumene hydroperoxide + 2 glutathione = 2-phenylpropan-2-ol + glutathione disulfide + H2O. The enzyme catalyses (9S)-hydroperoxy-(10E,12Z)-octadecadienoate + 2 glutathione = (9S)-hydroxy-(10E,12Z)-octadecadienoate + glutathione disulfide + H2O. It catalyses the reaction (13S)-hydroperoxy-(9Z,11E)-octadecadienoate + 2 glutathione = (13S)-hydroxy-(9Z,11E)-octadecadienoate + glutathione disulfide + H2O. It carries out the reaction (5S)-hydroperoxy-(6E,8Z,11Z,14Z)-eicosatetraenoate + 2 glutathione = (5S)-hydroxy-(6E,8Z,11Z,14Z)-eicosatetraenoate + glutathione disulfide + H2O. The catalysed reaction is (12R)-hydroperoxy-(5Z,8Z,10E,14Z)-eicosatetraenoate + 2 glutathione = (12R)-hydroxy-(5Z,8Z,10E,14Z)-eicosatetraenoate + glutathione disulfide + H2O. The enzyme catalyses (12S)-hydroperoxy-(5Z,8Z,10E,14Z)-eicosatetraenoate + 2 glutathione = (12S)-hydroxy-(5Z,8Z,10E,14Z)-eicosatetraenoate + glutathione disulfide + H2O. It catalyses the reaction (15S)-hydroperoxy-(5Z,8Z,11Z,13E)-eicosatetraenoate + 2 glutathione = (15S)-hydroxy-(5Z,8Z,11Z,13E)-eicosatetraenoate + glutathione disulfide + H2O. It carries out the reaction (5S)-hydroperoxy-(6E,8Z,11Z,14Z,17Z)-eicosapentaenoate + 2 glutathione = (5S)-hydroxy-(6E,8Z,11Z,14Z,17Z)-eicosapentaenoate + glutathione disulfide + H2O. The catalysed reaction is (12S)-hydroperoxy-(5Z,8Z,10E,14Z,17Z)-eicosapentaenoate + 2 glutathione = (12S)-hydroxy-(5Z,8Z,10E,14Z,17Z)-eicosapentaenoate + glutathione disulfide + H2O. The enzyme catalyses (15S)-hydroperoxy-(5Z,8Z,11Z,13E,17Z)-eicosapentaenoate + 2 glutathione = (15S)-hydroxy-(5Z,8Z,11Z,13E,17Z)-eicosapentaenoate + glutathione disulfide + H2O. It catalyses the reaction (15S)-hydroperoxy-(11Z,13E)-eicosadienoate + 2 glutathione = (15S)-hydroxy-(11Z,13E)-eicosadienoate + glutathione disulfide + H2O. It carries out the reaction (17S)-hydroperoxy-(4Z,7Z,10Z,13Z,15E,19Z)-docosahexaenoate + 2 glutathione = (17S)-hydroxy-(4Z,7Z,10Z,13Z,15E,19Z)-docosahexaenoate + glutathione disulfide + H2O. The catalysed reaction is a hydroperoxy-1,2-diacyl-glycero-3-phosphocholine + 2 glutathione = a hydroxy-1,2-diacyl-glycero-3-phosphocholine + glutathione disulfide + H2O. Its function is as follows. Essential antioxidant peroxidase that directly reduces phospholipid hydroperoxide even if they are incorporated in membranes and lipoproteins. Can also reduce fatty acid hydroperoxide, cholesterol hydroperoxide and thymine hydroperoxide. Plays a key role in protecting cells from oxidative damage by preventing membrane lipid peroxidation. Required to prevent cells from ferroptosis, a non-apoptotic cell death resulting from an iron-dependent accumulation of lipid reactive oxygen species. The presence of selenocysteine (Sec) versus Cys at the active site is essential for life: it provides resistance to overoxidation and prevents cells against ferroptosis. The presence of Sec at the active site is also essential for the survival of a specific type of parvalbumin-positive interneurons, thereby preventing against fatal epileptic seizures. May be required to protect cells from the toxicity of ingested lipid hydroperoxides. Required for normal sperm development and male fertility. Essential for maturation and survival of photoreceptor cells. Plays a role in a primary T-cell response to viral and parasitic infection by protecting T-cells from ferroptosis and by supporting T-cell expansion. Plays a role of glutathione peroxidase in platelets in the arachidonic acid metabolism. Reduces hydroperoxy ester lipids formed by a 15-lipoxygenase that may play a role as down-regulator of the cellular 15-lipoxygenase pathway. Can also reduce small soluble hydroperoxides such as H2O2, cumene hydroperoxide and tert-butyl hydroperoxide. Specifically able to suppress the production of leukotriene and prostaglandin in response to several stimuli by reducing fatty acid hydroperoxide. Functionally, specifically required to prevent mitochondrial cell death by mediating reduction of cardiolipin hydroperoxide. Also required for normal sperm development and male fertility. In terms of biological role, required for male fertility by stabilizing the condensed chromatin in sperm nuclei. This chain is Phospholipid hydroperoxide glutathione peroxidase, found in Rattus norvegicus (Rat).